The chain runs to 112 residues: B3 domain-containing protein At1g43171 (112 aa).

The TF-B3 DNA-binding region spans Asp-19 to Phe-112.

It is found in the nucleus. The chain is B3 domain-containing protein At1g43171 from Arabidopsis thaliana (Mouse-ear cress).